A 183-amino-acid chain; its full sequence is Glutathione-regulated potassium-efflux system ancillary protein KefG (183 aa).

This sequence belongs to the NAD(P)H dehydrogenase (quinone) family. KefG subfamily. As to quaternary structure, interacts with KefB.

The protein localises to the cell inner membrane. The enzyme catalyses a quinone + NADH + H(+) = a quinol + NAD(+). It carries out the reaction a quinone + NADPH + H(+) = a quinol + NADP(+). Functionally, regulatory subunit of a potassium efflux system that confers protection against electrophiles. Required for full activity of KefB. The polypeptide is Glutathione-regulated potassium-efflux system ancillary protein KefG (Salmonella paratyphi B (strain ATCC BAA-1250 / SPB7)).